The sequence spans 415 residues: Queuine tRNA-ribosyltransferase accessory subunit 2 (415 aa).

Positions 351, 353, 356, and 382 each coordinate Zn(2+).

Belongs to the queuine tRNA-ribosyltransferase family. QTRT2 subfamily. As to quaternary structure, heterodimer of a catalytic subunit QTRT1 and an accessory subunit QTRT2. Zn(2+) serves as cofactor.

The protein resides in the cytoplasm. Its subcellular location is the mitochondrion outer membrane. Non-catalytic subunit of the queuine tRNA-ribosyltransferase (TGT) that catalyzes the base-exchange of a guanine (G) residue with queuine (Q) at position 34 (anticodon wobble position) in tRNAs with GU(N) anticodons (tRNA-Asp, -Asn, -His and -Tyr), resulting in the hypermodified nucleoside queuosine (7-(((4,5-cis-dihydroxy-2-cyclopenten-1-yl)amino)methyl)-7-deazaguanosine). The sequence is that of Queuine tRNA-ribosyltransferase accessory subunit 2 from Pongo abelii (Sumatran orangutan).